The following is a 741-amino-acid chain: Chromosome transmission fidelity protein 18 (741 aa).

An ATP-binding site is contributed by 183 to 190; that stretch reads GPPGIGKT.

The protein belongs to the activator 1 small subunits family. CTF18 subfamily. In terms of assembly, component of the CTF18-RFC complex, which consists of CTF18, CTF8, DCC1, RFC2, RFC3, RFC4 and RFC5. CTF18 interacts with ECO1.

Its subcellular location is the nucleus. Functionally, essential for the fidelity of chromosome transmission. Required for the DNA replication block checkpoint. Component of the RFC-like complex CTF18-RFC which is required for efficient establishment of chromosome cohesion during S-phase and may load or unload POL30/PCNA. During a clamp loading circle, the RFC:clamp complex binds to DNA and the recognition of the double-stranded/single-stranded junction stimulates ATP hydrolysis by RFC. The complex presumably provides bipartite ATP sites in which one subunit supplies a catalytic site for hydrolysis of ATP bound to the neighboring subunit. Dissociation of RFC from the clamp leaves the clamp encircling DNA. The polypeptide is Chromosome transmission fidelity protein 18 (CTF18) (Saccharomyces cerevisiae (strain ATCC 204508 / S288c) (Baker's yeast)).